Here is a 122-residue protein sequence, read N- to C-terminus: Ribosome-binding factor A (122 aa).

Belongs to the RbfA family. Monomer. Binds 30S ribosomal subunits, but not 50S ribosomal subunits or 70S ribosomes.

The protein resides in the cytoplasm. Its function is as follows. One of several proteins that assist in the late maturation steps of the functional core of the 30S ribosomal subunit. Associates with free 30S ribosomal subunits (but not with 30S subunits that are part of 70S ribosomes or polysomes). Required for efficient processing of 16S rRNA. May interact with the 5'-terminal helix region of 16S rRNA. The sequence is that of Ribosome-binding factor A from Moorella thermoacetica (strain ATCC 39073 / JCM 9320).